A 318-amino-acid polypeptide reads, in one-letter code: Probable casein kinase I homolog ECU11_1980 (318 aa).

One can recognise a Protein kinase domain in the interval 8–276 (YTICREIGKG…YLNSLLDKIF (269 aa)). ATP is bound by residues 14-22 (IGKGGFGKV) and K37. D129 serves as the catalytic Proton acceptor.

It belongs to the protein kinase superfamily. CK1 Ser/Thr protein kinase family. Casein kinase I subfamily.

The protein resides in the nucleus. It catalyses the reaction L-seryl-[protein] + ATP = O-phospho-L-seryl-[protein] + ADP + H(+). It carries out the reaction L-threonyl-[protein] + ATP = O-phospho-L-threonyl-[protein] + ADP + H(+). Involved in DNA repair. May regulate the activity of protein(s) involved in double strand break repair caused by gamma rays. This chain is Probable casein kinase I homolog ECU11_1980, found in Encephalitozoon cuniculi (strain GB-M1) (Microsporidian parasite).